The primary structure comprises 351 residues: Biotin synthase (351 aa).

Positions 44-262 constitute a Radical SAM core domain; that stretch reads NRVQVSTLLS…LAVARILMPQ (219 aa). Residues Cys-59, Cys-63, and Cys-66 each coordinate [4Fe-4S] cluster. Residues Cys-103, Cys-134, Cys-194, and Arg-266 each coordinate [2Fe-2S] cluster.

Belongs to the radical SAM superfamily. Biotin synthase family. As to quaternary structure, homodimer. [4Fe-4S] cluster serves as cofactor. Requires [2Fe-2S] cluster as cofactor.

The catalysed reaction is (4R,5S)-dethiobiotin + (sulfur carrier)-SH + 2 reduced [2Fe-2S]-[ferredoxin] + 2 S-adenosyl-L-methionine = (sulfur carrier)-H + biotin + 2 5'-deoxyadenosine + 2 L-methionine + 2 oxidized [2Fe-2S]-[ferredoxin]. The protein operates within cofactor biosynthesis; biotin biosynthesis; biotin from 7,8-diaminononanoate: step 2/2. Catalyzes the conversion of dethiobiotin (DTB) to biotin by the insertion of a sulfur atom into dethiobiotin via a radical-based mechanism. The protein is Biotin synthase of Pseudomonas fluorescens (strain Pf0-1).